Here is a 95-residue protein sequence, read N- to C-terminus: Co-chaperonin GroES (95 aa).

This sequence belongs to the GroES chaperonin family. In terms of assembly, heptamer of 7 subunits arranged in a ring. Interacts with the chaperonin GroEL.

It localises to the cytoplasm. Its function is as follows. Together with the chaperonin GroEL, plays an essential role in assisting protein folding. The GroEL-GroES system forms a nano-cage that allows encapsulation of the non-native substrate proteins and provides a physical environment optimized to promote and accelerate protein folding. GroES binds to the apical surface of the GroEL ring, thereby capping the opening of the GroEL channel. The sequence is that of Co-chaperonin GroES from Streptococcus mutans serotype c (strain ATCC 700610 / UA159).